Here is a 329-residue protein sequence, read N- to C-terminus: MKVYYEQDANLEVLKGKTVAIIGYGSQGHAHAQNLRDSGVNVIVGQRPGGPNFELAKEHGFQPLSAAEAAAQADLIMILLPDQYQASVYENDIKPHLTAGKSLVFAHGFNIHFNQIVPPKDVDVFMIAPKGPGHLVRRTYTEGGGVPCLVAIHQDASGQAMEKALAYAMGVGGTRSGVIETTFREETETDLFGEQAVLCGGISALIQAGFETLVEAGYQPEIAYFECLHETKLIVDLIYEGGLAKMRHSISDTAEYGDYVTGRRIVTEETKKEMKAALKDIQEGRFARDFILECKANYPTFTARRRIEAEHPIEEVGARLRSMMPWLKK.

The KARI N-terminal Rossmann domain occupies 1–181 (MKVYYEQDAN…GGTRSGVIET (181 aa)). Residues 24–27 (YGSQ), arginine 47, and 82–85 (DQYQ) contribute to the NADP(+) site. Histidine 107 is a catalytic residue. Glycine 133 lines the NADP(+) pocket. Residues 182-327 (TFREETETDL…ARLRSMMPWL (146 aa)) enclose the KARI C-terminal knotted domain. 4 residues coordinate Mg(2+): aspartate 190, glutamate 194, glutamate 226, and glutamate 230. Serine 251 is a substrate binding site.

This sequence belongs to the ketol-acid reductoisomerase family. Requires Mg(2+) as cofactor.

It carries out the reaction (2R)-2,3-dihydroxy-3-methylbutanoate + NADP(+) = (2S)-2-acetolactate + NADPH + H(+). It catalyses the reaction (2R,3R)-2,3-dihydroxy-3-methylpentanoate + NADP(+) = (S)-2-ethyl-2-hydroxy-3-oxobutanoate + NADPH + H(+). It functions in the pathway amino-acid biosynthesis; L-isoleucine biosynthesis; L-isoleucine from 2-oxobutanoate: step 2/4. Its pathway is amino-acid biosynthesis; L-valine biosynthesis; L-valine from pyruvate: step 2/4. Its function is as follows. Involved in the biosynthesis of branched-chain amino acids (BCAA). Catalyzes an alkyl-migration followed by a ketol-acid reduction of (S)-2-acetolactate (S2AL) to yield (R)-2,3-dihydroxy-isovalerate. In the isomerase reaction, S2AL is rearranged via a Mg-dependent methyl migration to produce 3-hydroxy-3-methyl-2-ketobutyrate (HMKB). In the reductase reaction, this 2-ketoacid undergoes a metal-dependent reduction by NADPH to yield (R)-2,3-dihydroxy-isovalerate. This chain is Ketol-acid reductoisomerase (NADP(+)), found in Oleidesulfovibrio alaskensis (strain ATCC BAA-1058 / DSM 17464 / G20) (Desulfovibrio alaskensis).